The chain runs to 291 residues: Pituitary-specific positive transcription factor 1 (291 aa).

The 9aaTAD motif lies at Pro-5–Ile-13. Positions Met-124–Glu-198 constitute a POU-specific domain. The homeobox DNA-binding region spans Lys-214 to Lys-273.

It belongs to the POU transcription factor family. Class-1 subfamily. In terms of assembly, interacts with PITX1. Interacts with LHX3. Interacts with ELK1.

The protein resides in the nucleus. Its function is as follows. Transcription factor involved in the specification of the lactotrope, somatotrope, and thyrotrope phenotypes in the developing anterior pituitary. Activates growth hormone and prolactin genes. Specifically binds to the consensus sequence 5'-TAAAT-3'. This is Pituitary-specific positive transcription factor 1 (POU1F1) from Bos taurus (Bovine).